Consider the following 211-residue polypeptide: ATP phosphoribosyltransferase (211 aa).

It belongs to the ATP phosphoribosyltransferase family. Short subfamily. As to quaternary structure, heteromultimer composed of HisG and HisZ subunits.

The protein localises to the cytoplasm. The enzyme catalyses 1-(5-phospho-beta-D-ribosyl)-ATP + diphosphate = 5-phospho-alpha-D-ribose 1-diphosphate + ATP. Its pathway is amino-acid biosynthesis; L-histidine biosynthesis; L-histidine from 5-phospho-alpha-D-ribose 1-diphosphate: step 1/9. Functionally, catalyzes the condensation of ATP and 5-phosphoribose 1-diphosphate to form N'-(5'-phosphoribosyl)-ATP (PR-ATP). Has a crucial role in the pathway because the rate of histidine biosynthesis seems to be controlled primarily by regulation of HisG enzymatic activity. The polypeptide is ATP phosphoribosyltransferase (Clostridium botulinum (strain 657 / Type Ba4)).